Consider the following 212-residue polypeptide: Thiamine-phosphate synthase (212 aa).

Residues 40–44 (QFREK) and Asn75 contribute to the 4-amino-2-methyl-5-(diphosphooxymethyl)pyrimidine site. Positions 76 and 95 each coordinate Mg(2+). Ser113 contacts 4-amino-2-methyl-5-(diphosphooxymethyl)pyrimidine. 139-141 (TTS) lines the 2-[(2R,5Z)-2-carboxy-4-methylthiazol-5(2H)-ylidene]ethyl phosphate pocket. Lys142 lines the 4-amino-2-methyl-5-(diphosphooxymethyl)pyrimidine pocket. 2-[(2R,5Z)-2-carboxy-4-methylthiazol-5(2H)-ylidene]ethyl phosphate-binding positions include Gly171 and 191–192 (IS).

Belongs to the thiamine-phosphate synthase family. Mg(2+) serves as cofactor.

The catalysed reaction is 2-[(2R,5Z)-2-carboxy-4-methylthiazol-5(2H)-ylidene]ethyl phosphate + 4-amino-2-methyl-5-(diphosphooxymethyl)pyrimidine + 2 H(+) = thiamine phosphate + CO2 + diphosphate. The enzyme catalyses 2-(2-carboxy-4-methylthiazol-5-yl)ethyl phosphate + 4-amino-2-methyl-5-(diphosphooxymethyl)pyrimidine + 2 H(+) = thiamine phosphate + CO2 + diphosphate. It catalyses the reaction 4-methyl-5-(2-phosphooxyethyl)-thiazole + 4-amino-2-methyl-5-(diphosphooxymethyl)pyrimidine + H(+) = thiamine phosphate + diphosphate. The protein operates within cofactor biosynthesis; thiamine diphosphate biosynthesis; thiamine phosphate from 4-amino-2-methyl-5-diphosphomethylpyrimidine and 4-methyl-5-(2-phosphoethyl)-thiazole: step 1/1. Functionally, condenses 4-methyl-5-(beta-hydroxyethyl)thiazole monophosphate (THZ-P) and 2-methyl-4-amino-5-hydroxymethyl pyrimidine pyrophosphate (HMP-PP) to form thiamine monophosphate (TMP). The polypeptide is Thiamine-phosphate synthase (Staphylococcus saprophyticus subsp. saprophyticus (strain ATCC 15305 / DSM 20229 / NCIMB 8711 / NCTC 7292 / S-41)).